The chain runs to 145 residues: Leghemoglobin-1 (145 aa).

The 143-residue stretch at A3–Y145 folds into the Globin domain. Residues Y26 and Y31 each carry the nitrated tyrosine modification. S46 serves as a coordination point for heme b. Phosphoserine is present on S46. Position 62 (H62) interacts with O2. K65, H93, and K96 together coordinate heme b. Nitrated tyrosine is present on Y134.

It belongs to the plant globin family. Monomer. In terms of processing, nitrated in effective nodules and particularly in hypoxic conditions; this mechanism may play a protective role in the symbiosis by buffering toxic peroxynitrite NO(2)(-). Nitration level decrease during nodule senescence. Phosphorylation at Ser-46 disrupts the molecular environment of its porphyrin ring oxygen binding pocket, thus leading to a reduced oxygen consumption and to the delivery of oxygen O(2) to symbiosomes. In terms of tissue distribution, root nodules.

It is found in the cytoplasm. The protein localises to the cytosol. Its subcellular location is the nucleus. In terms of biological role, leghemoglobin that reversibly binds oxygen O(2) through a pentacoordinated heme iron. In root nodules, facilitates the diffusion of oxygen to the bacteroids while preventing the bacterial nitrogenase from being inactivated by buffering dioxygen, nitric oxide and carbon monoxide, and promoting the formation of reactive oxygen species (ROS, e.g. H(2)O(2)). This role is essential for symbiotic nitrogen fixation (SNF). The polypeptide is Leghemoglobin-1 (Vigna unguiculata (Cowpea)).